We begin with the raw amino-acid sequence, 496 residues long: Probable cytosol aminopeptidase (496 aa).

Positions 262 and 267 each coordinate Mn(2+). The active site involves K274. D285, D344, and E346 together coordinate Mn(2+). The active site involves R348.

This sequence belongs to the peptidase M17 family. The cofactor is Mn(2+).

The protein localises to the cytoplasm. The catalysed reaction is Release of an N-terminal amino acid, Xaa-|-Yaa-, in which Xaa is preferably Leu, but may be other amino acids including Pro although not Arg or Lys, and Yaa may be Pro. Amino acid amides and methyl esters are also readily hydrolyzed, but rates on arylamides are exceedingly low.. It catalyses the reaction Release of an N-terminal amino acid, preferentially leucine, but not glutamic or aspartic acids.. Functionally, presumably involved in the processing and regular turnover of intracellular proteins. Catalyzes the removal of unsubstituted N-terminal amino acids from various peptides. The polypeptide is Probable cytosol aminopeptidase (Rhizobium etli (strain CIAT 652)).